The following is a 229-amino-acid chain: UPF0758 protein Mbar_A2303 (229 aa).

In terms of domain architecture, MPN spans 106–228 (KVCSPKDVYT…YVSLKDEGFV (123 aa)). 3 residues coordinate Zn(2+): H177, H179, and D190. The JAMM motif motif lies at 177–190 (HNHPSGDPSPSRED).

It belongs to the UPF0758 family.

This is UPF0758 protein Mbar_A2303 from Methanosarcina barkeri (strain Fusaro / DSM 804).